Here is a 273-residue protein sequence, read N- to C-terminus: MTREITVGGVKIGGGRPLALVAGPCVIENETATLRCAERLMSICNGVGISLIFKASYDKANRTSVTAFRGPGMKEGLRILAKVKEALGVPVLSDIHSIEQVEPAAEVLDVLQIPAFLCRQTDLLVAAGNTGKVINVKKGQFLAPWDMKNVVGKISSCDNDNIILTERGASFGYNNLVVDMRSFPIMRSTGYPVIFDATHSVQLPGGEGTSSGGQREYVEFLSRAAVAAGVDGIFMEVHEEPEQALCDGPNSVRLDDMPALLKKLKAIDAIVNQ.

Belongs to the KdsA family.

Its subcellular location is the cytoplasm. The catalysed reaction is D-arabinose 5-phosphate + phosphoenolpyruvate + H2O = 3-deoxy-alpha-D-manno-2-octulosonate-8-phosphate + phosphate. Its pathway is carbohydrate biosynthesis; 3-deoxy-D-manno-octulosonate biosynthesis; 3-deoxy-D-manno-octulosonate from D-ribulose 5-phosphate: step 2/3. The protein operates within bacterial outer membrane biogenesis; lipopolysaccharide biosynthesis. This chain is 2-dehydro-3-deoxyphosphooctonate aldolase, found in Citrifermentans bemidjiense (strain ATCC BAA-1014 / DSM 16622 / JCM 12645 / Bem) (Geobacter bemidjiensis).